A 169-amino-acid chain; its full sequence is Large ribosomal subunit protein uL10 (169 aa).

This sequence belongs to the universal ribosomal protein uL10 family. Part of the ribosomal stalk of the 50S ribosomal subunit. The N-terminus interacts with L11 and the large rRNA to form the base of the stalk. The C-terminus forms an elongated spine to which L12 dimers bind in a sequential fashion forming a multimeric L10(L12)X complex.

Its function is as follows. Forms part of the ribosomal stalk, playing a central role in the interaction of the ribosome with GTP-bound translation factors. This is Large ribosomal subunit protein uL10 from Rickettsia bellii (strain OSU 85-389).